The following is a 263-amino-acid chain: 4-hydroxy-tetrahydrodipicolinate reductase (263 aa).

Residues 7–12, 96–98, and 122–125 each bind NAD(+); these read GFKGRM, GTT, and APNF. The Proton donor/acceptor role is filled by H152. H153 is a (S)-2,3,4,5-tetrahydrodipicolinate binding site. K156 (proton donor) is an active-site residue. Residue 162–163 coordinates (S)-2,3,4,5-tetrahydrodipicolinate; it reads GT.

This sequence belongs to the DapB family.

It localises to the cytoplasm. It carries out the reaction (S)-2,3,4,5-tetrahydrodipicolinate + NAD(+) + H2O = (2S,4S)-4-hydroxy-2,3,4,5-tetrahydrodipicolinate + NADH + H(+). The enzyme catalyses (S)-2,3,4,5-tetrahydrodipicolinate + NADP(+) + H2O = (2S,4S)-4-hydroxy-2,3,4,5-tetrahydrodipicolinate + NADPH + H(+). It participates in amino-acid biosynthesis; L-lysine biosynthesis via DAP pathway; (S)-tetrahydrodipicolinate from L-aspartate: step 4/4. Catalyzes the conversion of 4-hydroxy-tetrahydrodipicolinate (HTPA) to tetrahydrodipicolinate. The chain is 4-hydroxy-tetrahydrodipicolinate reductase from Listeria welshimeri serovar 6b (strain ATCC 35897 / DSM 20650 / CCUG 15529 / CIP 8149 / NCTC 11857 / SLCC 5334 / V8).